A 380-amino-acid chain; its full sequence is Glucose-1-phosphate adenylyltransferase (380 aa).

Alpha-D-glucose 1-phosphate is bound by residues Tyr99, Gly164, 179-180 (EK), and Ser190.

This sequence belongs to the bacterial/plant glucose-1-phosphate adenylyltransferase family. In terms of assembly, homotetramer.

It carries out the reaction alpha-D-glucose 1-phosphate + ATP + H(+) = ADP-alpha-D-glucose + diphosphate. Its pathway is glycan biosynthesis; glycogen biosynthesis. In terms of biological role, involved in the biosynthesis of ADP-glucose, a building block required for the elongation reactions to produce glycogen. Catalyzes the reaction between ATP and alpha-D-glucose 1-phosphate (G1P) to produce pyrophosphate and ADP-Glc. This chain is Glucose-1-phosphate adenylyltransferase, found in Bacillus subtilis (strain 168).